We begin with the raw amino-acid sequence, 454 residues long: N-myc 2 proto-oncogene protein (454 aa).

Disordered stretches follow at residues 133–166 (EKMQ…HSGT), 231–270 (AAPP…EEEE), and 326–374 (SPYV…VRRR). A compositionally biased stretch (acidic residues) spans 256-270 (ALSDEVDEEEDEEEE). The span at 363–374 (RKSDSEDSVRRR) shows a compositional bias: basic and acidic residues. One can recognise a bHLH domain in the interval 371–423 (VRRRNHNILERQRRNDLRSSFTTLRDHVPELVKNEKAAKVVILKKACEYVHYL). The interval 423 to 444 (LQAKEHQLLMEKEKLQARQQQL) is leucine-zipper.

In terms of assembly, efficient DNA binding requires dimerization with another bHLH protein.

It is found in the nucleus. The sequence is that of N-myc 2 proto-oncogene protein (N-MYC2) from Otospermophilus beecheyi (California ground squirrel).